Reading from the N-terminus, the 153-residue chain is Two-component response regulator ARR17 (153 aa).

Residues 21–149 (HVLAVDDNLI…DVEKLKCHLL (129 aa)) form the Response regulatory domain. Position 82 is a 4-aspartylphosphate (Asp-82).

Belongs to the ARR family. Type-A subfamily. Post-translationally, two-component system major event consists of a His-to-Asp phosphorelay between a sensor histidine kinase (HK) and a response regulator (RR). In plants, the His-to-Asp phosphorelay involves an additional intermediate named Histidine-containing phosphotransfer protein (HPt). This multistep phosphorelay consists of a His-Asp-His-Asp sequential transfer of a phosphate group between first a His and an Asp of the HK protein, followed by the transfer to a conserved His of the HPt protein and finally the transfer to an Asp in the receiver domain of the RR protein.

The protein localises to the nucleus. Its function is as follows. Functions as a response regulator involved in His-to-Asp phosphorelay signal transduction system. Phosphorylation of the Asp residue in the receiver domain activates the ability of the protein to promote the transcription of target genes. Type-A response regulators seem to act as negative regulators of the cytokinin signaling. The sequence is that of Two-component response regulator ARR17 (ARR17) from Arabidopsis thaliana (Mouse-ear cress).